The chain runs to 373 residues: Glutamine synthetase (373 aa).

At alanine 2 the chain carries N-acetylalanine. The required for glutamine-induced ubiquitination by CRL4(CRBN) and proteasomal degradation stretch occupies residues 2–25 (ATSASSHLNKGIKQMYMSLPQGEK). Lysine 11 and lysine 14 each carry N6-acetyllysine. Residues 24-106 (EKVQAMYIWV…VFCEVFKYNQ (83 aa)) form the GS beta-grasp domain. At tyrosine 104 the chain carries Phosphotyrosine. Positions 113–373 (LRHTCKRIMD…TGDQPFQYKN (261 aa)) constitute a GS catalytic domain. An ATP-binding site is contributed by glutamate 134. Mn(2+) contacts are provided by glutamate 134, glutamate 136, glutamate 196, and glutamate 203. Residue 203–208 (EFQIGP) participates in ATP binding. 246-247 (NW) serves as a coordination point for L-glutamate. Histidine 253 is a Mn(2+) binding site. Residues 255–257 (NFS), arginine 319, and arginine 324 each bind ATP. Arginine 319 is an L-glutamate binding site. Residue 336-338 (YFE) coordinates ADP. Glutamate 338 lines the Mn(2+) pocket. Arginine 340 contacts L-glutamate. Serine 343 is subject to Phosphoserine.

This sequence belongs to the glutamine synthetase family. Decamer; composed of two pentamers. Interacts with PALMD. Interacts with RHOJ. Interacts with BEST2; this interaction tethers a fraction of GLUL to the membrane, causing a decrease of cytosolic glutamine synthase (GS) activity and inhibits the chloride channel activity of BEST2 by affecting the gating at the aperture in the absence of intracellular glutamate. The cofactor is Mg(2+). It depends on Mn(2+) as a cofactor. In terms of processing, palmitoylated; undergoes autopalmitoylation. Post-translationally, acetylated by EP300/p300; acetylation is stimulated by increased glutamine levels and promotes ubiquitin-mediated proteasomal degradation. Ubiquitinated by ZNRF1. Ubiquitinated by the DCX (DDB1-CUL4-X-box) E3 ubiquitin-protein ligase complex called CRL4(CRBN), leading to proteasomal degradation.

The protein localises to the cytoplasm. It is found in the cytosol. The protein resides in the microsome. It localises to the mitochondrion. Its subcellular location is the cell membrane. The catalysed reaction is L-glutamate + NH4(+) + ATP = L-glutamine + ADP + phosphate + H(+). It catalyses the reaction L-cysteinyl-[protein] + hexadecanoyl-CoA = S-hexadecanoyl-L-cysteinyl-[protein] + CoA. With respect to regulation, glutamine synthetase activity is inhibited by methionine sulfoximine (MSO). Functionally, glutamine synthetase that catalyzes the ATP-dependent conversion of glutamate and ammonia to glutamine. Its role depends on tissue localization: in the brain, it regulates the levels of toxic ammonia and converts neurotoxic glutamate to harmless glutamine, whereas in the liver, it is one of the enzymes responsible for the removal of ammonia. Plays a key role in ammonium detoxification during erythropoiesis: the glutamine synthetase activity is required to remove ammonium generated by porphobilinogen deaminase (HMBS) during heme biosynthesis to prevent ammonium accumulation and oxidative stress. Essential for proliferation of fetal skin fibroblasts. Independently of its glutamine synthetase activity, required for endothelial cell migration during vascular development. Involved in angiogenesis by regulating membrane localization and activation of the GTPase RHOJ, possibly by promoting RHOJ palmitoylation. May act as a palmitoyltransferase for RHOJ: able to autopalmitoylate and then transfer the palmitoyl group to RHOJ. Plays a role in ribosomal 40S subunit biogenesis. Through the interaction with BEST2, inhibits BEST2 channel activity by affecting the gating at the aperture in the absence of intracellular L-glutamate, but sensitizes BEST2 to intracellular L-glutamate, which promotes the opening of BEST2 and thus relieves its inhibitory effect on BEST2. The chain is Glutamine synthetase from Cricetulus griseus (Chinese hamster).